A 352-amino-acid chain; its full sequence is Protein-glutamate methylesterase/protein-glutamine glutaminase 2 (352 aa).

In terms of domain architecture, Response regulatory spans 1-116 (MVVDDSAVVR…KQFLTDSADE (116 aa)). 4-aspartylphosphate is present on aspartate 50. The region spanning 162–352 (AQTTERIVAI…MAREIVTQLQ (191 aa)) is the CheB-type methylesterase domain. Catalysis depends on residues serine 174, histidine 200, and aspartate 296.

This sequence belongs to the CheB family. Phosphorylated by CheA. Phosphorylation of the N-terminal regulatory domain activates the methylesterase activity.

The protein localises to the cytoplasm. It carries out the reaction [protein]-L-glutamate 5-O-methyl ester + H2O = L-glutamyl-[protein] + methanol + H(+). It catalyses the reaction L-glutaminyl-[protein] + H2O = L-glutamyl-[protein] + NH4(+). Involved in chemotaxis. Part of a chemotaxis signal transduction system that modulates chemotaxis in response to various stimuli. Catalyzes the demethylation of specific methylglutamate residues introduced into the chemoreceptors (methyl-accepting chemotaxis proteins or MCP) by CheR. Also mediates the irreversible deamidation of specific glutamine residues to glutamic acid. The protein is Protein-glutamate methylesterase/protein-glutamine glutaminase 2 of Xanthomonas axonopodis pv. citri (strain 306).